The following is an 810-amino-acid chain: DNA-binding protein REB1 (810 aa).

2 stretches are compositionally biased toward basic and acidic residues: residues 1 to 10 (MPSGHNDKNA) and 29 to 44 (HQNH…LENK). Disordered regions lie at residues 1–80 (MPSG…ENIS), 114–161 (NQQD…GVDD), 180–243 (NNNN…TNND), 294–313 (HGLN…LSNS), and 346–365 (QDTQ…AGSV). Composition is skewed to low complexity over residues 51–64 (IVES…NNND) and 124–135 (NNNTDNGNDSNN). A compositionally biased stretch (basic and acidic residues) spans 149 to 161 (DKNKKDAGVGVDD). Residues 180–191 (NNNNNNSIANDS) show a composition bias toward low complexity. Residues 198–208 (HDNGNNHENSQ) are compositionally biased toward basic and acidic residues. The span at 346 to 355 (QDTQPHQQKS) shows a compositional bias: polar residues. Ser-355 carries the post-translational modification Phosphoserine. One can recognise an HTH myb-type domain in the interval 470-523 (HIFEQRGKWTAEEEQELAKLCAEKEGQWAEIGKTLGRMPEDCRDRWRNYVKCGT). Residues 497-519 (WAEIGKTLGRMPEDCRDRWRNYV) constitute a DNA-binding region (H-T-H motif). The tract at residues 572–667 (QNDHRNNDED…STHSKSLSNT (96 aa)) is disordered. A compositionally biased stretch (low complexity) spans 586–606 (ASAAAAAAAAIQEQQQLLQQK). Residues 627-636 (DNKDEDKPHD) are compositionally biased toward basic and acidic residues. Positions 643 to 667 (DDNSQNSMVPAPSATSTHSKSLSNT) are enriched in polar residues. Residues 692–717 (NWTIVSERMGGTRSRIQCRYKWNKLV) enclose the Myb-like domain. Residue Lys-807 forms a Glycyl lysine isopeptide (Lys-Gly) (interchain with G-Cter in SUMO) linkage.

Its subcellular location is the nucleus. Its function is as follows. DNA-binding protein that recognizes sites within both the enhancer and the promoter of rRNA transcription, as well as upstream of many genes transcribed by RNA polymerase II. It is essential for cell growth. May stimulate or inhibit transcription. Specifically recognizes the sequence 5'-CCGGGTA-3' or 5'-CGGGTRR-3' (where R is any purine). A member of the general regulatory factors (GRFs) which act as genome partitioners. Acts as a chromatin insulator which are known as STARs (Subtelomeric anti-silencing region). STARs prevent negative or positive transcription influence by extending across chromatin to a promoter. The sequence is that of DNA-binding protein REB1 (REB1) from Saccharomyces cerevisiae (strain ATCC 204508 / S288c) (Baker's yeast).